The primary structure comprises 120 residues: NAD(P)H-quinone oxidoreductase subunit 3, chloroplastic (120 aa).

3 helical membrane-spanning segments follow: residues Ile-9–Gly-29, Met-64–Met-84, and Val-88–Leu-108.

The protein belongs to the complex I subunit 3 family. As to quaternary structure, NDH is composed of at least 16 different subunits, 5 of which are encoded in the nucleus.

It is found in the plastid. The protein localises to the chloroplast thylakoid membrane. It carries out the reaction a plastoquinone + NADH + (n+1) H(+)(in) = a plastoquinol + NAD(+) + n H(+)(out). The enzyme catalyses a plastoquinone + NADPH + (n+1) H(+)(in) = a plastoquinol + NADP(+) + n H(+)(out). In terms of biological role, NDH shuttles electrons from NAD(P)H:plastoquinone, via FMN and iron-sulfur (Fe-S) centers, to quinones in the photosynthetic chain and possibly in a chloroplast respiratory chain. The immediate electron acceptor for the enzyme in this species is believed to be plastoquinone. Couples the redox reaction to proton translocation, and thus conserves the redox energy in a proton gradient. This Ceratophyllum demersum (Rigid hornwort) protein is NAD(P)H-quinone oxidoreductase subunit 3, chloroplastic.